Here is a 2531-residue protein sequence, read N- to C-terminus: Highly reducing polyketide synthase gloL (2531 aa).

The Ketosynthase family 3 (KS3) domain maps to 15 to 435 (YEPLAIVGMG…GANAHVILDS (421 aa)). Residues Cys187, His322, and His358 each act as for beta-ketoacyl synthase activity in the active site. Positions 449 to 525 (TNGLSVNGHS…GHSVNGHSKP (77 aa)) are disordered. Positions 453 to 503 (SVNGHSINGNSVNGHSVNGHSTNGHSINGNSVNGHSVNGNSVNGHSTNGHS) are enriched in low complexity. Residues 505-521 (NGHSANGNSINGHSVNG) show a composition bias toward polar residues. The segment at 602–909 (MVFTGQGAQW…VTALERGKDC (308 aa)) is malonyl-CoA:ACP transacylase (MAT) domain. Positions 971 to 1099 (HEILGSRTVE…GQIRSGTDNP (129 aa)) are N-terminal hotdog fold. The interval 971–1251 (HEILGSRTVE…GGQFSPIEED (281 aa)) is dehydratase (DH) domain. A PKS/mFAS DH domain is found at 971–1254 (HEILGSRTVE…FSPIEEDSSD (284 aa)). His1003 functions as the Proton acceptor; for dehydratase activity in the catalytic mechanism. The C-terminal hotdog fold stretch occupies residues 1109–1254 (DHPRSVPSPY…FSPIEEDSSD (146 aa)). The active-site Proton donor; for dehydratase activity is Asp1169. Residues 1419–1597 (DFFTAAGHSK…FSGCDATVYD (179 aa)) are methyltransferase (CMet) domain. Residues 1806–2114 (GLLQTLRWVP…KGSHIGKIVV (309 aa)) form an enoyl reductase (ER) (ER) domain region. The interval 2139–2312 (GYLLVGGLGG…ASVVDIGVMG (174 aa)) is ketoreductase (KR) domain. Positions 2413-2505 (MSSVETDSSI…ALGLLTIEGL (93 aa)) constitute a Carrier domain. Ser2464 carries the O-(pantetheine 4'-phosphoryl)serine modification.

Its pathway is mycotoxin biosynthesis. Highly reducing polyketide synthase; part of the gene cluster that mediates the biosynthesis of pneumocandins, lipohexapeptides of the echinocandin family that prevent fungal cell wall formation by non-competitive inhibition of beta-1,3-glucan synthase. The 10,12-dimethylmyristoyl side chain is synthesized by the reducing polyketide synthase gloL/GLPKS4. The thioesterase gloN/GLHYD exclusively interacts with gloL/GLPKS4 to maintain turnover of the polyketide side chain. The 10R,12S-dimethylmyristic acid is then transferred to the first thiolation domain of the nonribosomal peptide synthetase gloA/GLNRPS4 by the acyl-AMP ligase gloD/GLligase, followed by its acylation to L-ornithine to trigger elongation of the cyclic hexapeptide. L-ornithine, 4R-hydroxyl-L-proline (generated from L-proline by the dioxygenase gloF/GLOXY2), 3S-hydroxyl-L-homotyrosine (generated by gloG/GLHtyB, gloH/GLHtyA, gloI/GLHtyC, gloJ/GLHtyD and hydroxylated at C-3 by the dioxygenase gloM/GLOXY1), 3R-hydroxyl-L-glutamine (generated from L-glutamine probably by the dioxygenase gloE/GLOXY3) and 3S-hydroxyl-L-proline (generated from L-proline by the dioxygenase gloF/GLOXY2 to yield pneumocandin B0), or 3S-hydroxyl-4S-methyl-L-proline (generated from L-leucine by the dioxygenase gloC/GLOXY4 to yield pneumocandin A0) are sequentially added to the growing chain. The last C domain of gloA/GLNRPS4 is proposed to be responsible for cyclization by condensation to form the peptide bond between L-ornithine and 3S-hydroxyl-4S-methyl-L-proline (for pneumocandin A0) or 3S-hydroxyl-L-proline (for pneumocandin B0). Finally, the subsequent C-4 hydroxylation of 3S-hydroxyl-L-homotyrosine and L-ornithine dihydroxylation at C-4 and C-5 are performed by the cytochrome P450 monooxygenases gloP/GLP450-1 and gloO/GLP450-2, respectively. The polypeptide is Highly reducing polyketide synthase gloL (Glarea lozoyensis (strain ATCC 20868 / MF5171)).